The chain runs to 394 residues: Na(+)/H(+) antiporter NhaA (394 aa).

Helical transmembrane passes span alanine 14 to leucine 34, leucine 59 to valine 79, valine 95 to phenylalanine 115, glycine 125 to glycine 145, valine 154 to phenylalanine 174, valine 179 to tryptophan 199, leucine 213 to valine 233, glycine 254 to valine 274, isoleucine 292 to valine 312, isoleucine 328 to leucine 348, and leucine 363 to valine 383.

This sequence belongs to the NhaA Na(+)/H(+) (TC 2.A.33) antiporter family.

It localises to the cell inner membrane. It catalyses the reaction Na(+)(in) + 2 H(+)(out) = Na(+)(out) + 2 H(+)(in). Its function is as follows. Na(+)/H(+) antiporter that extrudes sodium in exchange for external protons. The polypeptide is Na(+)/H(+) antiporter NhaA (Yersinia pseudotuberculosis serotype O:1b (strain IP 31758)).